We begin with the raw amino-acid sequence, 683 residues long: Heat shock protein homolog ECU03_0520 (683 aa).

Belongs to the heat shock protein 70 family.

It localises to the cytoplasm. This Encephalitozoon cuniculi (strain GB-M1) (Microsporidian parasite) protein is Heat shock protein homolog ECU03_0520.